The primary structure comprises 258 residues: Regulatory protein RecX (258 aa).

Belongs to the RecX family.

The protein resides in the cytoplasm. Functionally, modulates RecA activity. This Streptococcus equi subsp. equi (strain 4047) protein is Regulatory protein RecX.